Here is a 398-residue protein sequence, read N- to C-terminus: Elongation factor Tu (398 aa).

The tr-type G domain occupies 10–207 (KPHVNIGTIG…TVDDYIPDPE (198 aa)). A G1 region spans residues 19-26 (GHVDHGKT). Residue 19 to 26 (GHVDHGKT) coordinates GTP. Residue T26 coordinates Mg(2+). Residues 63–67 (GITIN) form a G2 region. The G3 stretch occupies residues 84–87 (DAPG). GTP contacts are provided by residues 84 to 88 (DAPGH) and 139 to 142 (NKVD). Residues 139 to 142 (NKVD) form a G4 region. A G5 region spans residues 177-179 (SAL).

The protein belongs to the TRAFAC class translation factor GTPase superfamily. Classic translation factor GTPase family. EF-Tu/EF-1A subfamily. In terms of assembly, monomer.

The protein localises to the cytoplasm. It carries out the reaction GTP + H2O = GDP + phosphate + H(+). Functionally, GTP hydrolase that promotes the GTP-dependent binding of aminoacyl-tRNA to the A-site of ribosomes during protein biosynthesis. This Streptococcus mutans serotype c (strain ATCC 700610 / UA159) protein is Elongation factor Tu.